Here is a 146-residue protein sequence, read N- to C-terminus: Hemoglobin subunit delta (146 aa).

Residues 2 to 146 (HLTGDEKSAV…VATALAHKYH (145 aa)) enclose the Globin domain. S50 carries the phosphoserine modification. H63 and H92 together coordinate heme b.

Belongs to the globin family. In terms of assembly, heterotetramer of two delta chains and two alpha chains. Red blood cells.

This chain is Hemoglobin subunit delta (HBD), found in Aotus trivirgatus (Three-striped night monkey).